An 89-amino-acid chain; its full sequence is Small ribosomal subunit protein uS15 (89 aa).

The segment covering 1 to 21 has biased composition (basic and acidic residues); that stretch reads MALTTEEKKQVLSEYGLHETD. The interval 1–24 is disordered; it reads MALTTEEKKQVLSEYGLHETDTGS.

This sequence belongs to the universal ribosomal protein uS15 family. Part of the 30S ribosomal subunit. Forms a bridge to the 50S subunit in the 70S ribosome, contacting the 23S rRNA.

Functionally, one of the primary rRNA binding proteins, it binds directly to 16S rRNA where it helps nucleate assembly of the platform of the 30S subunit by binding and bridging several RNA helices of the 16S rRNA. In terms of biological role, forms an intersubunit bridge (bridge B4) with the 23S rRNA of the 50S subunit in the ribosome. In Rhodococcus jostii (strain RHA1), this protein is Small ribosomal subunit protein uS15.